The chain runs to 103 residues: Large ribosomal subunit protein bL21 (103 aa).

Belongs to the bacterial ribosomal protein bL21 family. Part of the 50S ribosomal subunit. Contacts protein L20.

In terms of biological role, this protein binds to 23S rRNA in the presence of protein L20. This chain is Large ribosomal subunit protein bL21, found in Glaesserella parasuis serovar 5 (strain SH0165) (Haemophilus parasuis).